The primary structure comprises 388 residues: Succinate--CoA ligase [ADP-forming] subunit beta (388 aa).

The ATP-grasp domain maps to 9-244 (KEILRKYGVT…LDEEDPAEIE (236 aa)). Residues lysine 46, 53–55 (GRG), glutamate 99, alanine 102, and glutamate 107 each bind ATP. Positions 199 and 213 each coordinate Mg(2+). Substrate is bound by residues asparagine 264 and 321–323 (GIM).

It belongs to the succinate/malate CoA ligase beta subunit family. As to quaternary structure, heterotetramer of two alpha and two beta subunits. The cofactor is Mg(2+).

It carries out the reaction succinate + ATP + CoA = succinyl-CoA + ADP + phosphate. The catalysed reaction is GTP + succinate + CoA = succinyl-CoA + GDP + phosphate. Its pathway is carbohydrate metabolism; tricarboxylic acid cycle; succinate from succinyl-CoA (ligase route): step 1/1. Succinyl-CoA synthetase functions in the citric acid cycle (TCA), coupling the hydrolysis of succinyl-CoA to the synthesis of either ATP or GTP and thus represents the only step of substrate-level phosphorylation in the TCA. The beta subunit provides nucleotide specificity of the enzyme and binds the substrate succinate, while the binding sites for coenzyme A and phosphate are found in the alpha subunit. This Janthinobacterium sp. (strain Marseille) (Minibacterium massiliensis) protein is Succinate--CoA ligase [ADP-forming] subunit beta.